The primary structure comprises 600 residues: Glutamine--fructose-6-phosphate aminotransferase [isomerizing] (600 aa).

Catalysis depends on Cys-2, which acts as the Nucleophile; for GATase activity. The region spanning 2–217 (CGIVGFIGEQ…DKEIVIVMKE (216 aa)) is the Glutamine amidotransferase type-2 domain. 2 consecutive SIS domains span residues 283 to 422 (IRNA…AKGE) and 452 to 590 (LAKQ…VDKP). The For Fru-6P isomerization activity role is filled by Lys-595.

Homodimer.

The protein resides in the cytoplasm. The catalysed reaction is D-fructose 6-phosphate + L-glutamine = D-glucosamine 6-phosphate + L-glutamate. Catalyzes the first step in hexosamine metabolism, converting fructose-6P into glucosamine-6P using glutamine as a nitrogen source. The polypeptide is Glutamine--fructose-6-phosphate aminotransferase [isomerizing] (Bacillus anthracis).